The following is a 414-amino-acid chain: Protein DNA-DAMAGE INDUCIBLE 1 (414 aa).

The region spanning 1-76 (MRITVMTAGE…LMMMVSNASS (76 aa)) is the Ubiquitin-like domain. Positions 213–292 (LKAFVDSGAQ…NMEFLFGLDM (80 aa)) constitute a Peptidase A2 domain. Residue D218 is part of the active site. Residues 332–374 (ERVPNDASSSGATVPSGFTEKKNNTVANPTSQQPKRQNTSEGP) form a disordered region. The segment covering 355 to 372 (NTVANPTSQQPKRQNTSE) has biased composition (polar residues). In terms of domain architecture, UBA spans 374 to 414 (PEFEAKIAKLVELGFSRDSVIQALKLFEGNEEQAAGFLFGG).

It belongs to the DDI1 family. In terms of assembly, homodimer.

Its subcellular location is the cytoplasm. The protein resides in the cytosol. Its function is as follows. Receptor of ubiquitinated protein targeted to ubiquitin/proteasome-mediated proteolysis (UPP). Relatively weak affinity for both 'Lys-48'- and 'Lys-63'-linked ubiquitin chains with a slight preference for 'Lys-48-'linked chains of three or more ubiquitin units. The protein is Protein DNA-DAMAGE INDUCIBLE 1 of Arabidopsis thaliana (Mouse-ear cress).